The primary structure comprises 449 residues: Adenylosuccinate synthetase isozyme 1 A (449 aa).

Polar residues predominate over residues 1–10 (MSHKSCYTNP). Residues 1–22 (MSHKSCYTNPGTGGKRPRNDKG) are disordered. GTP contacts are provided by residues 34–40 (GDEGKGK) and 62–64 (GHT). The active-site Proton acceptor is the Asp-35. Mg(2+) is bound by residues Asp-35 and Gly-62. Asp-35 is a substrate binding site. Residues 35–38 (DEGK), 60–63 (NAGH), Thr-155, Arg-169, Asn-248, Thr-263, and Arg-327 contribute to the IMP site. The active-site Proton donor is His-63. Residue 323–329 (VTTGRKR) participates in substrate binding. GTP is bound by residues Arg-329, 355 to 357 (KLD), and 437 to 440 (GVGK).

Belongs to the adenylosuccinate synthetase family. As to quaternary structure, homodimer. Mg(2+) serves as cofactor.

The protein localises to the cytoplasm. It catalyses the reaction IMP + L-aspartate + GTP = N(6)-(1,2-dicarboxyethyl)-AMP + GDP + phosphate + 2 H(+). It participates in purine metabolism; AMP biosynthesis via de novo pathway; AMP from IMP: step 1/2. Functionally, component of the purine nucleotide cycle (PNC), which interconverts IMP and AMP to regulate the nucleotide levels in various tissues, and which contributes to glycolysis and ammoniagenesis. Catalyzes the first committed step in the biosynthesis of AMP from IMP. The protein is Adenylosuccinate synthetase isozyme 1 A (adss1a) of Salmo salar (Atlantic salmon).